Consider the following 260-residue polypeptide: HLA class II histocompatibility antigen, DP alpha 1 chain (260 aa).

Residues 1–28 (MRPEDRMFHIRAVILRALSLAFLLSLRG) form the signal peptide. The alpha-1 stretch occupies residues 29-115 (AGAIKADHVS…QRSNHTQATN (87 aa)). At 29–222 (AGAIKADHVS…EPIQMPETTE (194 aa)) the chain is on the extracellular side. N-linked (GlcNAc...) asparagine glycans are attached at residues Asn-109 and Asn-149. Residues 116 to 209 (DPPEVTVFPK…GLDQPLLKHW (94 aa)) are alpha-2. The 93-residue stretch at 118 to 210 (PEVTVFPKEP…LDQPLLKHWE (93 aa)) folds into the Ig-like C1-type domain. Cys-138 and Cys-194 are disulfide-bonded. Residues 210 to 222 (EAQEPIQMPETTE) form a connecting peptide region. Residues 223–245 (TVLCALGLVLGLVGIIVGTVLII) form a helical membrane-spanning segment. The Cytoplasmic portion of the chain corresponds to 246-260 (KSLRSGHDPRAQGTL).

It belongs to the MHC class II family. Heterodimer of an alpha and a beta subunit; also referred as MHC class II molecule. In the endoplasmic reticulum (ER) it forms a heterononamer; 3 MHC class II molecules bind to a CD74 homotrimer (also known as invariant chain or HLA class II histocompatibility antigen gamma chain). In the endosomal/lysosomal system; CD74 undergoes sequential degradation by various proteases; leaving a small fragment termed CLIP on each MHC class II molecule. MHC class II molecule interacts with HLA_DM, and HLA_DO in B-cells, in order to release CLIP and facilitate the binding of antigenic peptides.

The protein localises to the cell membrane. It is found in the endoplasmic reticulum membrane. It localises to the golgi apparatus. The protein resides in the trans-Golgi network membrane. Its subcellular location is the endosome membrane. The protein localises to the lysosome membrane. Binds peptides derived from antigens that access the endocytic route of antigen presenting cells (APC) and presents them on the cell surface for recognition by the CD4 T-cells. The peptide binding cleft accommodates peptides of 10-30 residues. The peptides presented by MHC class II molecules are generated mostly by degradation of proteins that access the endocytic route, where they are processed by lysosomal proteases and other hydrolases. Exogenous antigens that have been endocytosed by the APC are thus readily available for presentation via MHC II molecules, and for this reason this antigen presentation pathway is usually referred to as exogenous. As membrane proteins on their way to degradation in lysosomes as part of their normal turn-over are also contained in the endosomal/lysosomal compartments, exogenous antigens must compete with those derived from endogenous components. Autophagy is also a source of endogenous peptides, autophagosomes constitutively fuse with MHC class II loading compartments. In addition to APCs, other cells of the gastrointestinal tract, such as epithelial cells, express MHC class II molecules and CD74 and act as APCs, which is an unusual trait of the GI tract. To produce a MHC class II molecule that presents an antigen, three MHC class II molecules (heterodimers of an alpha and a beta chain) associate with a CD74 trimer in the ER to form a heterononamer. Soon after the entry of this complex into the endosomal/lysosomal system where antigen processing occurs, CD74 undergoes a sequential degradation by various proteases, including CTSS and CTSL, leaving a small fragment termed CLIP (class-II-associated invariant chain peptide). The removal of CLIP is facilitated by HLA-DM via direct binding to the alpha-beta-CLIP complex so that CLIP is released. HLA-DM stabilizes MHC class II molecules until primary high affinity antigenic peptides are bound. The MHC II molecule bound to a peptide is then transported to the cell membrane surface. In B-cells, the interaction between HLA-DM and MHC class II molecules is regulated by HLA-DO. Primary dendritic cells (DCs) also to express HLA-DO. Lysosomal microenvironment has been implicated in the regulation of antigen loading into MHC II molecules, increased acidification produces increased proteolysis and efficient peptide loading. The sequence is that of HLA class II histocompatibility antigen, DP alpha 1 chain (HLA-DPA1) from Homo sapiens (Human).